A 175-amino-acid polypeptide reads, in one-letter code: Urease accessory protein UreE (175 aa).

The segment at 151–175 is disordered; the sequence is GGAYGGSPSHAHRHSHVHSHSHETP. Positions 160-169 are enriched in basic residues; sequence HAHRHSHVHS.

Belongs to the UreE family.

The protein resides in the cytoplasm. Its function is as follows. Involved in urease metallocenter assembly. Binds nickel. Probably functions as a nickel donor during metallocenter assembly. The chain is Urease accessory protein UreE from Synechococcus sp. (strain WH7805).